Consider the following 380-residue polypeptide: O-phospho-L-seryl-tRNA:Cys-tRNA synthase (380 aa).

Residues 86–87, asparagine 192, and 215–217 each bind pyridoxal 5'-phosphate; these read AR and SGH. Lysine 218 bears the N6-(pyridoxal phosphate)lysine mark.

Belongs to the SepCysS family. As to quaternary structure, homodimer. Interacts with SepRS. Pyridoxal 5'-phosphate is required as a cofactor.

The enzyme catalyses O-phospho-L-seryl-tRNA(Cys) + hydrogen sulfide + H(+) = L-cysteinyl-tRNA(Cys) + phosphate. Functionally, converts O-phospho-L-seryl-tRNA(Cys) (Sep-tRNA(Cys)) to L-cysteinyl-tRNA(Cys) (Cys-tRNA(Cys)). In Methanococcus maripaludis (strain DSM 14266 / JCM 13030 / NBRC 101832 / S2 / LL), this protein is O-phospho-L-seryl-tRNA:Cys-tRNA synthase.